A 244-amino-acid chain; its full sequence is Phosphoadenosine 5'-phosphosulfate reductase (244 aa).

Residue Cys-239 is the Nucleophile; cysteine thiosulfonate intermediate of the active site.

The protein belongs to the PAPS reductase family. CysH subfamily.

Its subcellular location is the cytoplasm. The catalysed reaction is [thioredoxin]-disulfide + sulfite + adenosine 3',5'-bisphosphate + 2 H(+) = [thioredoxin]-dithiol + 3'-phosphoadenylyl sulfate. It functions in the pathway sulfur metabolism; hydrogen sulfide biosynthesis; sulfite from sulfate: step 3/3. In terms of biological role, catalyzes the formation of sulfite from phosphoadenosine 5'-phosphosulfate (PAPS) using thioredoxin as an electron donor. This chain is Phosphoadenosine 5'-phosphosulfate reductase, found in Salmonella dublin (strain CT_02021853).